Reading from the N-terminus, the 333-residue chain is Putative fimbrium anchoring subunit Fim4B (333 aa).

The N-terminal stretch at 1–20 (MRNTRYGFLVLLSSLLMLTG) is a signal peptide. A lipid anchor (N-palmitoyl cysteine) is attached at C21. C21 carries S-diacylglycerol cysteine lipidation. A disordered region spans residues 274–333 (ENAGTGEDGKPTPPPEIELPPDDKIEVDKPETPPNPDGGGGMGGNVDGWGPEDNVELPVN). Basic and acidic residues predominate over residues 294 to 304 (PDDKIEVDKPE). Over residues 310 to 320 (DGGGGMGGNVD) the composition is skewed to gly residues.

This sequence belongs to the bacteroidetes fimbrillin superfamily. FimB/Mfa2 family.

It localises to the cell outer membrane. Functionally, putative fimbrium anchoring subunit. The chain is Putative fimbrium anchoring subunit Fim4B from Bacteroides ovatus (strain ATCC 8483 / DSM 1896 / JCM 5824 / BCRC 10623 / CCUG 4943 / NCTC 11153).